Here is a 210-residue protein sequence, read N- to C-terminus: tRNA (guanine-N(7)-)-methyltransferase (210 aa).

Positions 43, 68, 95, and 117 each coordinate S-adenosyl-L-methionine. D117 is a catalytic residue. Substrate-binding positions include K121, D153, and T190–E193.

The protein belongs to the class I-like SAM-binding methyltransferase superfamily. TrmB family.

It catalyses the reaction guanosine(46) in tRNA + S-adenosyl-L-methionine = N(7)-methylguanosine(46) in tRNA + S-adenosyl-L-homocysteine. It participates in tRNA modification; N(7)-methylguanine-tRNA biosynthesis. Catalyzes the formation of N(7)-methylguanine at position 46 (m7G46) in tRNA. In Macrococcus caseolyticus (strain JCSC5402) (Macrococcoides caseolyticum), this protein is tRNA (guanine-N(7)-)-methyltransferase.